A 515-amino-acid chain; its full sequence is Serine--tRNA ligase, cytoplasmic (515 aa).

An interaction with tRNA region spans residues 9 to 61 (RTDKGGDPEIIRETQRKRFKDVSLVDKLVQADTEWRKCRFTADNLNKAKNLCS). L-serine contacts are provided by Thr271 and Arg302. Residues 302–304 (RQE) and 318–321 (VHQF) each bind ATP. An L-serine-binding site is contributed by Glu325. Position 391 to 394 (391 to 394 (ELVS)) interacts with ATP. Asn427 is a binding site for L-serine. The interval 475–515 (PIDQETTKKQKKQQEGGKKKKHQGGDADLENKVENMSVNDS) is disordered. Basic and acidic residues predominate over residues 479-507 (ETTKKQKKQQEGGKKKKHQGGDADLENKV). Residues 482–494 (KKQKKQQEGGKKK) carry the Nuclear localization signal motif.

This sequence belongs to the class-II aminoacyl-tRNA synthetase family. Type-1 seryl-tRNA synthetase subfamily.

The protein resides in the cytoplasm. It is found in the nucleus. The enzyme catalyses tRNA(Ser) + L-serine + ATP = L-seryl-tRNA(Ser) + AMP + diphosphate + H(+). It catalyses the reaction tRNA(Sec) + L-serine + ATP = L-seryl-tRNA(Sec) + AMP + diphosphate + H(+). Functionally, catalyzes the attachment of serine to tRNA(Ser) in a two-step reaction: serine is first activated by ATP to form Ser-AMP and then transferred to the acceptor end of tRNA(Ser). Is probably also able to aminoacylate tRNA(Sec) with serine, to form the misacylated tRNA L-seryl-tRNA(Sec), which will be further converted into selenocysteinyl-tRNA(Sec). In the nucleus, binds to the vegfa core promoter and prevents myc binding and transcriptional activation by myc. Thereby inhibits the production of vegfa and sprouting angiogenesis mediated by vegfa. This chain is Serine--tRNA ligase, cytoplasmic (sars1), found in Danio rerio (Zebrafish).